Here is a 507-residue protein sequence, read N- to C-terminus: Maturase K (507 aa).

It belongs to the intron maturase 2 family. MatK subfamily.

The protein resides in the plastid. Its subcellular location is the chloroplast. In terms of biological role, usually encoded in the trnK tRNA gene intron. Probably assists in splicing its own and other chloroplast group II introns. This is Maturase K from Cryptomeria japonica (Japanese cedar).